The primary structure comprises 512 residues: Alpha-1B-glycoprotein (512 aa).

The first 18 residues, 1–18 (MSLLATVLLLWGFTLGPG), serve as a signal peptide directing secretion. 5 Ig-like V-type domains span residues 22 to 126 (MLDS…VTGK), 127 to 219 (EPLP…MYAS), 220 to 312 (QAPP…PVEL), 313 to 415 (MWSD…LRVN), and 416 to 512 (GPPP…IVEG). Residues N44, N89, and N192 are each glycosylated (N-linked (GlcNAc...) asparagine). Intrachain disulfides connect C49-C96, C153-C195, C245-C292, C343-C392, and C441-C488. 4 N-linked (GlcNAc...) asparagine glycosylation sites follow: N369, N381, N389, and N485.

As to quaternary structure, interacts with CRISP3. In terms of tissue distribution, expressed in the liver hepatocytes of male and female GH transgenic mice and in the liver of female, but not of male, non-transgenic mice.

The protein resides in the secreted. In Mus musculus (Mouse), this protein is Alpha-1B-glycoprotein (A1bg).